Consider the following 108-residue polypeptide: MLCLRYFIPMLLVANAAPYFFYPIFMLSMIARKYPCPYCMIILGLLINTRTLWSDSTFFSFNRNIFDTKAFPTELKEAGYRLVRLSWIRWLAGKESIHIPWLDATIKL.

The chain crosses the membrane as a helical span at residues 7 to 27 (FIPMLLVANAAPYFFYPIFML).

It to N.crassa NCU05373.1.

The protein resides in the membrane. This is an uncharacterized protein from Schizosaccharomyces pombe (strain 972 / ATCC 24843) (Fission yeast).